The chain runs to 305 residues: UDP-N-acetylenolpyruvoylglucosamine reductase 2 (305 aa).

The region spanning 33–197 (VGGKADVFVA…LEARFELEEG (165 aa)) is the FAD-binding PCMH-type domain. Arg-176 is a catalytic residue. Residue Ser-226 is the Proton donor of the active site. Glu-296 is a catalytic residue.

This sequence belongs to the MurB family. Requires FAD as cofactor.

The protein localises to the cytoplasm. It carries out the reaction UDP-N-acetyl-alpha-D-muramate + NADP(+) = UDP-N-acetyl-3-O-(1-carboxyvinyl)-alpha-D-glucosamine + NADPH + H(+). It functions in the pathway cell wall biogenesis; peptidoglycan biosynthesis. In terms of biological role, cell wall formation. This chain is UDP-N-acetylenolpyruvoylglucosamine reductase 2, found in Bacillus cereus (strain ATCC 10987 / NRS 248).